Reading from the N-terminus, the 384-residue chain is MEGLGRSCLWLRRELSPPRPRLLLLDCRSRELYESARIGGALSVALPALLLRRLRRGSLSVRALLPGPPLQPPPPAPVLLYDQGGGRRRRGEAEAEAEEWEAESVLGTLLQKLREEGYLAYYLQGGFSRFQAECPHLCETSLAGRAGSSMAPVPGPVPVVGLGSLCLGSDCSDAESEADRDSMSCGLDSEGATPPPVGLRASFPVQILPNLYLGSARDSANLESLAKLGIRYILNVTPNLPNFFEKNGDFHYKQIPISDHWSQNLSRFFPEAIEFIDEALSQNCGVLVHCLAGVSRSVTVTVAYLMQKLHLSLNDAYDLVKRKKSNISPNFNFMGQLLDFERSLRLEERHSQEQGSGGQASAASNPPSFFTTPTSDGAFELAPT.

Phosphoserine is present on S16. One can recognise a Rhodanese domain in the interval 18 to 139 (PRPRLLLLDC…FQAECPHLCE (122 aa)). Residues 203–346 (FPVQILPNLY…LLDFERSLRL (144 aa)) form the Tyrosine-protein phosphatase domain. S262 is modified (phosphoserine). Catalysis depends on C290, which acts as the Phosphocysteine intermediate. Positions 348–384 (ERHSQEQGSGGQASAASNPPSFFTTPTSDGAFELAPT) are disordered. The residue at position 351 (S351) is a Phosphoserine. Positions 359–375 (QASAASNPPSFFTTPTS) are enriched in polar residues.

It belongs to the protein-tyrosine phosphatase family. Non-receptor class dual specificity subfamily.

The protein localises to the cytoplasm. The catalysed reaction is O-phospho-L-tyrosyl-[protein] + H2O = L-tyrosyl-[protein] + phosphate. It carries out the reaction O-phospho-L-seryl-[protein] + H2O = L-seryl-[protein] + phosphate. It catalyses the reaction O-phospho-L-threonyl-[protein] + H2O = L-threonyl-[protein] + phosphate. Inactivates MAP kinases. Has a specificity for the ERK family. In Homo sapiens (Human), this protein is Dual specificity protein phosphatase 9 (DUSP9).